The chain runs to 281 residues: 2-dehydro-3-deoxyphosphooctonate aldolase (281 aa).

This sequence belongs to the KdsA family.

The protein resides in the cytoplasm. The catalysed reaction is D-arabinose 5-phosphate + phosphoenolpyruvate + H2O = 3-deoxy-alpha-D-manno-2-octulosonate-8-phosphate + phosphate. It functions in the pathway carbohydrate biosynthesis; 3-deoxy-D-manno-octulosonate biosynthesis; 3-deoxy-D-manno-octulosonate from D-ribulose 5-phosphate: step 2/3. The protein operates within bacterial outer membrane biogenesis; lipopolysaccharide biosynthesis. The polypeptide is 2-dehydro-3-deoxyphosphooctonate aldolase (Psychromonas ingrahamii (strain DSM 17664 / CCUG 51855 / 37)).